Consider the following 153-residue polypeptide: Probable disulfide formation protein (153 aa).

The helical transmembrane segment at 4-23 (DTRLYLAWLVALAATLGSLY) threads the bilayer. Residues cysteine 33 and cysteine 36 are joined by a disulfide bond. The next 2 membrane-spanning stretches (helical) occupy residues 38–57 (AQRI…AFVG) and 64–81 (YVLP…FQNL). Cysteines 93 and 101 form a disulfide. Residues 117-139 (RALTIPVLSMIAFALILALLSWP) traverse the membrane as a helical segment.

This sequence belongs to the DsbB family. BdbC subfamily.

The protein resides in the cell membrane. Functionally, required for disulfide bond formation in some proteins. This Deinococcus radiodurans (strain ATCC 13939 / DSM 20539 / JCM 16871 / CCUG 27074 / LMG 4051 / NBRC 15346 / NCIMB 9279 / VKM B-1422 / R1) protein is Probable disulfide formation protein.